Reading from the N-terminus, the 115-residue chain is Large ribosomal subunit protein bL20 (115 aa).

The protein belongs to the bacterial ribosomal protein bL20 family.

Its function is as follows. Binds directly to 23S ribosomal RNA and is necessary for the in vitro assembly process of the 50S ribosomal subunit. It is not involved in the protein synthesizing functions of that subunit. This Pelodictyon phaeoclathratiforme (strain DSM 5477 / BU-1) protein is Large ribosomal subunit protein bL20.